The sequence spans 257 residues: Acetylglutamate kinase (257 aa).

Substrate-binding positions include 43 to 44 (GG), R65, and N157. Residues 180–185 (DVSGIL) and 208–210 (IIT) contribute to the ATP site.

The protein belongs to the acetylglutamate kinase family. ArgB subfamily. Homodimer.

It is found in the cytoplasm. It catalyses the reaction N-acetyl-L-glutamate + ATP = N-acetyl-L-glutamyl 5-phosphate + ADP. Its pathway is amino-acid biosynthesis; L-arginine biosynthesis; N(2)-acetyl-L-ornithine from L-glutamate: step 2/4. Catalyzes the ATP-dependent phosphorylation of N-acetyl-L-glutamate. This Proteus mirabilis (strain HI4320) protein is Acetylglutamate kinase.